The chain runs to 252 residues: T-box transcription factor mls-1 (252 aa).

The T-box DNA-binding region spans 40–210; the sequence is LWRRFHNLGT…SNPFAKGFRE (171 aa).

In terms of assembly, may interact with unc-37.

The protein resides in the nucleus. Functionally, probable transcription factor required for the cell fate specification of non-striated uterine muscle precursor cells. Furthermore, may function with the transcriptional corepressor unc-37. In Caenorhabditis elegans, this protein is T-box transcription factor mls-1.